A 134-amino-acid polypeptide reads, in one-letter code: Transcription antitermination protein NusB (134 aa).

This sequence belongs to the NusB family.

Involved in transcription antitermination. Required for transcription of ribosomal RNA (rRNA) genes. Binds specifically to the boxA antiterminator sequence of the ribosomal RNA (rrn) operons. The sequence is that of Transcription antitermination protein NusB from Shewanella amazonensis (strain ATCC BAA-1098 / SB2B).